Consider the following 290-residue polypeptide: Alpha-mannosidase (290 aa).

Aspartate 17 functions as the Nucleophile in the catalytic mechanism. Residue asparagine 64 is glycosylated (N-linked (GlcNAc...) asparagine).

It belongs to the glycosyl hydrolase 38 family. In terms of assembly, dimer. It depends on Zn(2+) as a cofactor.

The catalysed reaction is Hydrolysis of terminal, non-reducing alpha-D-mannose residues in alpha-D-mannosides.. Its activity is regulated as follows. Inhibited by swainsonine but not by 1-desoxymannojirimycin. Its function is as follows. Liberates mannose from p-nitrophenyl-alpha-D-mannoside. In Lablab purpureus (Hyacinth bean), this protein is Alpha-mannosidase.